The sequence spans 140 residues: Nucleoside diphosphate kinase (140 aa).

ATP contacts are provided by Lys11, Phe59, Arg87, Thr93, Arg104, and Asn114. The active-site Pros-phosphohistidine intermediate is the His117.

It belongs to the NDK family. As to quaternary structure, homotetramer. It depends on Mg(2+) as a cofactor.

It is found in the cytoplasm. The enzyme catalyses a 2'-deoxyribonucleoside 5'-diphosphate + ATP = a 2'-deoxyribonucleoside 5'-triphosphate + ADP. The catalysed reaction is a ribonucleoside 5'-diphosphate + ATP = a ribonucleoside 5'-triphosphate + ADP. In terms of biological role, major role in the synthesis of nucleoside triphosphates other than ATP. The ATP gamma phosphate is transferred to the NDP beta phosphate via a ping-pong mechanism, using a phosphorylated active-site intermediate. This Bartonella tribocorum (strain CIP 105476 / IBS 506) protein is Nucleoside diphosphate kinase.